The following is a 538-amino-acid chain: Adenine deaminase (538 aa).

The protein belongs to the metallo-dependent hydrolases superfamily. Adenine deaminase family. Mn(2+) serves as cofactor.

It carries out the reaction adenine + H2O + H(+) = hypoxanthine + NH4(+). This chain is Adenine deaminase, found in Methanothermobacter thermautotrophicus (strain ATCC 29096 / DSM 1053 / JCM 10044 / NBRC 100330 / Delta H) (Methanobacterium thermoautotrophicum).